The primary structure comprises 291 residues: Undecaprenyl-diphosphatase 2 (291 aa).

A run of 6 helical transmembrane segments spans residues 39–59 (PGAA…LIYF), 85–105 (AQMG…GVTL), 118–138 (ITAT…RLAA), 203–223 (FLLA…DAAA), 231–251 (PTVF…AWFM), and 262–282 (FVWY…TGAL).

This sequence belongs to the UppP family.

It localises to the cell membrane. It catalyses the reaction di-trans,octa-cis-undecaprenyl diphosphate + H2O = di-trans,octa-cis-undecaprenyl phosphate + phosphate + H(+). Its function is as follows. Catalyzes the dephosphorylation of undecaprenyl diphosphate (UPP). Confers resistance to bacitracin. This chain is Undecaprenyl-diphosphatase 2, found in Streptomyces avermitilis (strain ATCC 31267 / DSM 46492 / JCM 5070 / NBRC 14893 / NCIMB 12804 / NRRL 8165 / MA-4680).